The primary structure comprises 849 residues: Probable receptor-like protein kinase At1g30570 (849 aa).

The N-terminal stretch at 1–28 is a signal peptide; it reads MSKLRKKYLEHLLCVLIFFTYVIGYGEA. At 29-429 the chain is on the extracellular side; it reads QSKSFLVDCG…GHSVSDSKMR (401 aa). Asn-40, Asn-57, Asn-94, Asn-122, Asn-158, Asn-268, Asn-271, Asn-305, and Asn-343 each carry an N-linked (GlcNAc...) asparagine glycan. Residues 430-450 traverse the membrane as a helical segment; that stretch reads IIWISVGAGIAIIIFFVFLGI. The Cytoplasmic portion of the chain corresponds to 451–849; that stretch reads LVVCLCKKRR…QTGSALHNSA (399 aa). In terms of domain architecture, Protein kinase spans 520-793; the sequence is FDDGLAIGVG…GEVLWSLEYV (274 aa). ATP contacts are provided by residues 526-534 and Lys-548; that span reads IGVGGFGKV. The active-site Proton acceptor is the Asp-644. The interval 810-849 is disordered; sequence FSSSQAVEEAPESFTLPACSNQDSSETEQSQTGSALHNSA. Positions 827 to 849 are enriched in polar residues; that stretch reads ACSNQDSSETEQSQTGSALHNSA.

Belongs to the protein kinase superfamily. Ser/Thr protein kinase family.

The protein resides in the cell membrane. This chain is Probable receptor-like protein kinase At1g30570, found in Arabidopsis thaliana (Mouse-ear cress).